The following is a 388-amino-acid chain: Succinate--CoA ligase [ADP-forming] subunit beta (388 aa).

ATP contacts are provided by residues Lys-46, 53-55, Glu-99, Cys-102, and Glu-107; that span reads GRG. Asn-199 and Asp-213 together coordinate Mg(2+). Residues Asn-264 and 321–323 contribute to the substrate site; that span reads GIV.

This sequence belongs to the succinate/malate CoA ligase beta subunit family. As to quaternary structure, heterotetramer of two alpha and two beta subunits. It depends on Mg(2+) as a cofactor.

It catalyses the reaction succinate + ATP + CoA = succinyl-CoA + ADP + phosphate. It carries out the reaction GTP + succinate + CoA = succinyl-CoA + GDP + phosphate. It participates in carbohydrate metabolism; tricarboxylic acid cycle; succinate from succinyl-CoA (ligase route): step 1/1. Its function is as follows. Succinyl-CoA synthetase functions in the citric acid cycle (TCA), coupling the hydrolysis of succinyl-CoA to the synthesis of either ATP or GTP and thus represents the only step of substrate-level phosphorylation in the TCA. The beta subunit provides nucleotide specificity of the enzyme and binds the substrate succinate, while the binding sites for coenzyme A and phosphate are found in the alpha subunit. The chain is Succinate--CoA ligase [ADP-forming] subunit beta from Actinobacillus pleuropneumoniae serotype 5b (strain L20).